Consider the following 492-residue polypeptide: N-succinylglutamate 5-semialdehyde dehydrogenase (492 aa).

220-225 (GSANTG) lines the NAD(+) pocket. Residues Glu-243 and Cys-277 contribute to the active site.

It belongs to the aldehyde dehydrogenase family. AstD subfamily.

It carries out the reaction N-succinyl-L-glutamate 5-semialdehyde + NAD(+) + H2O = N-succinyl-L-glutamate + NADH + 2 H(+). Its pathway is amino-acid degradation; L-arginine degradation via AST pathway; L-glutamate and succinate from L-arginine: step 4/5. Functionally, catalyzes the NAD-dependent reduction of succinylglutamate semialdehyde into succinylglutamate. The chain is N-succinylglutamate 5-semialdehyde dehydrogenase from Escherichia coli (strain SE11).